A 200-amino-acid polypeptide reads, in one-letter code: 3-isopropylmalate dehydratase small subunit (200 aa).

Belongs to the LeuD family. LeuD type 1 subfamily. Heterodimer of LeuC and LeuD.

The enzyme catalyses (2R,3S)-3-isopropylmalate = (2S)-2-isopropylmalate. Its pathway is amino-acid biosynthesis; L-leucine biosynthesis; L-leucine from 3-methyl-2-oxobutanoate: step 2/4. Catalyzes the isomerization between 2-isopropylmalate and 3-isopropylmalate, via the formation of 2-isopropylmaleate. This is 3-isopropylmalate dehydratase small subunit from Actinobacillus succinogenes (strain ATCC 55618 / DSM 22257 / CCUG 43843 / 130Z).